The chain runs to 266 residues: MDTFQVIILALIQGLTEFLPISSSAHLILPAQLLGWEDQGLSFDVAVNTGSLFAVVIYFRHELWAMFKAWIASIVKGQHSDDSKLAWWIILATLPAVFFGFMAKDFIATHLRNTGVIAVTTVVFGLLLWWADKMSRHDLTIYQTGWRKALLIGFAQALALIPGTSRSGATMTAALMLGLSRDAAARFSFLMSVPVSLGAAILVGKDLAESPLPIDYQALTLGTVISFAAAYLCIHYFLKIISRMGMTPFVIYRLALGAVLCGFIFL.

The next 8 helical transmembrane spans lie at 1 to 21 (MDTFQVIILALIQGLTEFLPI), 39 to 59 (QGLSFDVAVNTGSLFAVVIYF), 87 to 107 (WWIILATLPAVFFGFMAKDFI), 114 to 134 (TGVIAVTTVVFGLLLWWADKM), 149 to 169 (ALLIGFAQALALIPGTSRSGA), 183 to 203 (AAARFSFLMSVPVSLGAAILV), 218 to 238 (ALTLGTVISFAAAYLCIHYFL), and 246 to 266 (MTPFVIYRLALGAVLCGFIFL).

It belongs to the UppP family.

Its subcellular location is the cell inner membrane. It carries out the reaction di-trans,octa-cis-undecaprenyl diphosphate + H2O = di-trans,octa-cis-undecaprenyl phosphate + phosphate + H(+). In terms of biological role, catalyzes the dephosphorylation of undecaprenyl diphosphate (UPP). Confers resistance to bacitracin. This chain is Undecaprenyl-diphosphatase 1, found in Shewanella oneidensis (strain ATCC 700550 / JCM 31522 / CIP 106686 / LMG 19005 / NCIMB 14063 / MR-1).